The following is a 631-amino-acid chain: Phosphomethylpyrimidine synthase (631 aa).

Substrate contacts are provided by residues Asn239, Met268, Tyr297, His333, 353–355, 394–397, and Glu433; these read SRG and DGLR. Residue His437 participates in Zn(2+) binding. Tyr460 is a binding site for substrate. His501 is a binding site for Zn(2+). The [4Fe-4S] cluster site is built by Cys581, Cys584, and Cys589.

The protein belongs to the ThiC family. As to quaternary structure, homodimer. Requires [4Fe-4S] cluster as cofactor.

It carries out the reaction 5-amino-1-(5-phospho-beta-D-ribosyl)imidazole + S-adenosyl-L-methionine = 4-amino-2-methyl-5-(phosphooxymethyl)pyrimidine + CO + 5'-deoxyadenosine + formate + L-methionine + 3 H(+). It participates in cofactor biosynthesis; thiamine diphosphate biosynthesis. Functionally, catalyzes the synthesis of the hydroxymethylpyrimidine phosphate (HMP-P) moiety of thiamine from aminoimidazole ribotide (AIR) in a radical S-adenosyl-L-methionine (SAM)-dependent reaction. This chain is Phosphomethylpyrimidine synthase, found in Salmonella dublin (strain CT_02021853).